A 199-amino-acid polypeptide reads, in one-letter code: ATP-dependent Clp protease proteolytic subunit (199 aa).

Residue serine 97 is the Nucleophile of the active site. Histidine 122 is a catalytic residue.

The protein belongs to the peptidase S14 family. As to quaternary structure, fourteen ClpP subunits assemble into 2 heptameric rings which stack back to back to give a disk-like structure with a central cavity, resembling the structure of eukaryotic proteasomes.

It localises to the cytoplasm. It catalyses the reaction Hydrolysis of proteins to small peptides in the presence of ATP and magnesium. alpha-casein is the usual test substrate. In the absence of ATP, only oligopeptides shorter than five residues are hydrolyzed (such as succinyl-Leu-Tyr-|-NHMec, and Leu-Tyr-Leu-|-Tyr-Trp, in which cleavage of the -Tyr-|-Leu- and -Tyr-|-Trp bonds also occurs).. Functionally, cleaves peptides in various proteins in a process that requires ATP hydrolysis. Has a chymotrypsin-like activity. Plays a major role in the degradation of misfolded proteins. The sequence is that of ATP-dependent Clp protease proteolytic subunit from Pelobacter propionicus (strain DSM 2379 / NBRC 103807 / OttBd1).